Here is a 407-residue protein sequence, read N- to C-terminus: Probable succinyl-diaminopimelate desuccinylase (407 aa).

Histidine 72 contacts Zn(2+). Aspartate 74 is a catalytic residue. Residue aspartate 105 coordinates Zn(2+). The active-site Proton acceptor is the glutamate 139. Zn(2+)-binding residues include glutamate 140, glutamate 165, and histidine 378.

It belongs to the peptidase M20A family. It depends on Zn(2+) as a cofactor. Requires Co(2+) as cofactor.

It catalyses the reaction N-succinyl-(2S,6S)-2,6-diaminopimelate + H2O = (2S,6S)-2,6-diaminopimelate + succinate. The protein operates within amino-acid biosynthesis; L-lysine biosynthesis via DAP pathway; LL-2,6-diaminopimelate from (S)-tetrahydrodipicolinate (succinylase route): step 3/3. In Staphylococcus aureus (strain N315), this protein is Probable succinyl-diaminopimelate desuccinylase (dapE).